A 445-amino-acid chain; its full sequence is Argininosuccinate synthase (445 aa).

ATP contacts are provided by residues 17 to 25 (AFSGGLDTS) and A43. Y99 lines the L-citrulline pocket. G129 and T131 together coordinate ATP. Positions 131, 135, and 136 each coordinate L-aspartate. L-citrulline is bound at residue N135. Residue D136 coordinates ATP. Residues R139 and S192 each coordinate L-citrulline. D194 serves as a coordination point for ATP. L-citrulline-binding residues include T201, E203, and E280.

This sequence belongs to the argininosuccinate synthase family. Type 2 subfamily. Homotetramer.

It is found in the cytoplasm. The enzyme catalyses L-citrulline + L-aspartate + ATP = 2-(N(omega)-L-arginino)succinate + AMP + diphosphate + H(+). It functions in the pathway amino-acid biosynthesis; L-arginine biosynthesis; L-arginine from L-ornithine and carbamoyl phosphate: step 2/3. This chain is Argininosuccinate synthase, found in Ralstonia pickettii (strain 12J).